The chain runs to 552 residues: Glutamine-dependent NAD(+) synthetase (552 aa).

One can recognise a CN hydrolase domain in the interval 11–253 (LRIAMAQFDF…DQWLVVDYAA (243 aa)). The Proton acceptor; for glutaminase activity role is filled by E52. K119 acts as the For glutaminase activity in catalysis. Residue Y125 participates in L-glutamine binding. The Nucleophile; for glutaminase activity role is filled by C157. 2 residues coordinate L-glutamine: S183 and K189. Residues 275–552 (AWRAVVRGLK…YPITNGYSGQ (278 aa)) form a ligase region. An ATP-binding site is contributed by 298–305 (GLSGGIDS). N381 contributes to the deamido-NAD(+) binding site. T405 serves as a coordination point for ATP. Deamido-NAD(+)-binding residues include E410 and K522.

The protein in the C-terminal section; belongs to the NAD synthetase family.

The catalysed reaction is deamido-NAD(+) + L-glutamine + ATP + H2O = L-glutamate + AMP + diphosphate + NAD(+) + H(+). Its pathway is cofactor biosynthesis; NAD(+) biosynthesis; NAD(+) from deamido-NAD(+) (L-Gln route): step 1/1. Functionally, catalyzes the ATP-dependent amidation of deamido-NAD to form NAD. Uses L-glutamine as a nitrogen source. This Xanthomonas campestris pv. campestris (strain 8004) protein is Glutamine-dependent NAD(+) synthetase.